A 309-amino-acid chain; its full sequence is Olfactory receptor 6C4 (309 aa).

Residues 1–23 lie on the Extracellular side of the membrane; that stretch reads MKNRTMFGEFILLGLTNQPELQV. N-linked (GlcNAc...) asparagine glycosylation occurs at Asn-3. The chain crosses the membrane as a helical span at residues 24 to 44; sequence MIFIFLFLTYMLSILGNLTII. Residues 45-52 are Cytoplasmic-facing; the sequence is TLTLLDPH. A helical membrane pass occupies residues 53–73; that stretch reads LQTPMYFFLRNFSFLEISFTS. The Extracellular segment spans residues 74 to 97; it reads IFIPRFLTSMTTGNKVISFAGCLT. A disulfide bond links Cys-95 and Cys-187. A helical transmembrane segment spans residues 98–118; the sequence is QYFFAIFLGATEFYLLASMSY. Topologically, residues 119–137 are cytoplasmic; sequence DRYVAICKPLHYLTIMSSR. A helical transmembrane segment spans residues 138-158; that stretch reads VCIQLVFCSWLGGFLAILPPI. The Extracellular portion of the chain corresponds to 159–195; it reads ILMTQVDFCVSNILNHYYCDYGPLVELACSDTSLLEL. Residues 196–215 traverse the membrane as a helical segment; sequence MVILLAVVTLMVTLVLVTLS. Topologically, residues 216 to 235 are cytoplasmic; the sequence is YTYIIRTILRIPSAQQRTKA. Residues 236-256 traverse the membrane as a helical segment; that stretch reads FSTCSSHMIVISLSYGSCMFM. The Extracellular portion of the chain corresponds to 257–269; the sequence is YINPSAKEGGAFN. Residues 270–290 traverse the membrane as a helical segment; it reads KGIAVLITSVTPLLNPFIYTL. Topologically, residues 291–309 are cytoplasmic; it reads RNQQVKQAFKDSVKKIVKL.

This sequence belongs to the G-protein coupled receptor 1 family.

The protein resides in the cell membrane. Odorant receptor. This chain is Olfactory receptor 6C4 (OR6C4), found in Homo sapiens (Human).